Consider the following 264-residue polypeptide: Small ribosomal subunit protein uS2 (264 aa).

The interval 228-264 is disordered; that stretch reads QLDAEDDYEDYDGSEYDDDYEETEYTDAVIPDEETEE. The span at 230 to 264 shows a compositional bias: acidic residues; sequence DAEDDYEDYDGSEYDDDYEETEYTDAVIPDEETEE.

This sequence belongs to the universal ribosomal protein uS2 family.

This chain is Small ribosomal subunit protein uS2, found in Nostoc punctiforme (strain ATCC 29133 / PCC 73102).